A 367-amino-acid polypeptide reads, in one-letter code: DNA polymerase IV (367 aa).

The UmuC domain maps to 14–198 (IIHIDMDAFF…LPIAKFHGVG (185 aa)). Mg(2+) is bound by residues D18 and D116. Residue E117 is part of the active site.

The protein belongs to the DNA polymerase type-Y family. In terms of assembly, monomer. Requires Mg(2+) as cofactor.

The protein resides in the cytoplasm. It catalyses the reaction DNA(n) + a 2'-deoxyribonucleoside 5'-triphosphate = DNA(n+1) + diphosphate. Functionally, poorly processive, error-prone DNA polymerase involved in untargeted mutagenesis. Copies undamaged DNA at stalled replication forks, which arise in vivo from mismatched or misaligned primer ends. These misaligned primers can be extended by PolIV. Exhibits no 3'-5' exonuclease (proofreading) activity. May be involved in translesional synthesis, in conjunction with the beta clamp from PolIII. The chain is DNA polymerase IV from Streptococcus thermophilus (strain ATCC BAA-491 / LMD-9).